We begin with the raw amino-acid sequence, 240 residues long: Hairy and enhancer of split-related protein HELT (240 aa).

The 56-residue stretch at 10 to 65 (RTPVSHKVIEKRRRDRINRCLNELGKTVPMALAKQSSGKLEKAEILEMTVQYLRAL) folds into the bHLH domain. Lys-48 is subject to N6-acetyllysine. Residues 86-121 (FHYGYHECMKNLVHYLTTVERMETKDTKYARILAFL) enclose the Orange domain.

The protein belongs to the HEY family. As to quaternary structure, self-associates. Interacts with HES5 and HEY2. As to expression, expressed in heart and testis.

The protein resides in the nucleus. In terms of biological role, transcriptional repressor which binds preferentially to the canonical E box sequence 5'-CACGCG-3'. Required for the development of GABAergic neurons. The sequence is that of Hairy and enhancer of split-related protein HELT (Helt) from Mus musculus (Mouse).